Reading from the N-terminus, the 130-residue chain is MIGNYNYGTGRRKSSVARVFIKAGSGKIVVNDKPVDEYFSRETGRMIVRQPLVLTDNLNRFDIMVNVAGGGESGQAGAVRHGITRALIDLDAGMKPTLKAAGLVTRDAREVERKKVGFHKARRRKQFSKR.

The protein belongs to the universal ribosomal protein uS9 family.

This chain is Small ribosomal subunit protein uS9, found in Thiobacillus denitrificans (strain ATCC 25259 / T1).